A 164-amino-acid chain; its full sequence is Microfibrillar-associated protein 5 (164 aa).

The first 28 residues, 1 to 28 (MLFLGQKALLLVLAISIPSDWLPLGVSG), serve as a signal peptide directing secretion. Residues 30–32 (RGD) carry the Cell attachment site motif. A glycan (N-linked (GlcNAc...) asparagine) is linked at Asn70.

It belongs to the MFAP family. Interacts with TGFB2. Interacts with BMP2. Interacts with FBN1 (via N-terminal domain) and FBN2. In terms of processing, forms intermolecular disulfide bonds either with other MAGP-2 molecules or with other components of the microfibrils.

Its subcellular location is the secreted. The protein resides in the extracellular space. The protein localises to the extracellular matrix. Its function is as follows. May play a role in hematopoiesis. In the cardiovascular system, could regulate growth factors or participate in cell signaling in maintaining large vessel integrity. Component of the elastin-associated microfibrils. The protein is Microfibrillar-associated protein 5 (Mfap5) of Mus musculus (Mouse).